Here is a 147-residue protein sequence, read N- to C-terminus: Phospholipase A2 inhibitor subunit A (147 aa).

The C-type lectin domain maps to 62–143; that stretch reads EICRQAGGRI…DDNLLVVCEF (82 aa). 2 cysteine pairs are disulfide-bonded: Cys-64–Cys-141 and Cys-119–Cys-133. N-linked (GlcNAc...) asparagine glycosylation is present at Asn-103.

The protein belongs to the alpha-type phospholipase A2 inhibitor family. As to quaternary structure, homotrimer; non-covalently linked. Glycosylated. Expressed by the liver.

The protein resides in the secreted. Inhibits the enzymatic activity of the acidic phospholipase A2 (PLA2). In Gloydius brevicaudus siniticus (Chinese mamushi), this protein is Phospholipase A2 inhibitor subunit A.